The following is a 116-amino-acid chain: Large ribosomal subunit protein bL17 (116 aa).

The protein belongs to the bacterial ribosomal protein bL17 family. In terms of assembly, part of the 50S ribosomal subunit. Contacts protein L32.

This chain is Large ribosomal subunit protein bL17, found in Crocosphaera subtropica (strain ATCC 51142 / BH68) (Cyanothece sp. (strain ATCC 51142)).